A 447-amino-acid chain; its full sequence is Chordin-like protein 1 (447 aa).

The signal sequence occupies residues 1-22 (MEGIKYIASLVFFFVFLEASKT). 2 consecutive VWFC domains span residues 30–95 (TYCM…PRCP) and 108–174 (KSCE…RVCR). The N-linked (GlcNAc...) asparagine glycan is linked to Asn-113. The Cell attachment site signature appears at 174–176 (RGD). A disordered region spans residues 199-219 (HSYLRSPYDPPPSRQAGGLPR). Positions 253 to 318 (QVCVSNGKTY…LDGKCCKVCP (66 aa)) constitute a VWFC 3 domain. Asn-286 carries N-linked (GlcNAc...) asparagine glycosylation.

The protein localises to the secreted. Seems to antagonize the function of BMP4 by binding to it and preventing its interaction with receptors. Alters the fate commitment of neural stem cells from gliogenesis to neurogenesis. Contributes to neuronal differentiation of neural stem cells in the brain by preventing the adoption of a glial fate. May play a crucial role in dorsoventral axis formation. May play a role in embryonic bone formation. Plays a role during anterior segment eye development. This Rattus norvegicus (Rat) protein is Chordin-like protein 1 (Chrdl1).